A 208-amino-acid polypeptide reads, in one-letter code: Probable nicotinate-nucleotide adenylyltransferase (208 aa).

The protein belongs to the NadD family.

It carries out the reaction nicotinate beta-D-ribonucleotide + ATP + H(+) = deamido-NAD(+) + diphosphate. It participates in cofactor biosynthesis; NAD(+) biosynthesis; deamido-NAD(+) from nicotinate D-ribonucleotide: step 1/1. In terms of biological role, catalyzes the reversible adenylation of nicotinate mononucleotide (NaMN) to nicotinic acid adenine dinucleotide (NaAD). This Trichormus variabilis (strain ATCC 29413 / PCC 7937) (Anabaena variabilis) protein is Probable nicotinate-nucleotide adenylyltransferase.